A 159-amino-acid chain; its full sequence is Small ribosomal subunit protein uS7c (159 aa).

The tract at residues 137-159 (HAIRKKEETHKMAESNRAXAHYR) is disordered. The span at 141-150 (KKEETHKMAE) shows a compositional bias: basic and acidic residues.

It belongs to the universal ribosomal protein uS7 family. As to quaternary structure, part of the 30S ribosomal subunit.

It is found in the plastid. Its subcellular location is the chloroplast. One of the primary rRNA binding proteins, it binds directly to 16S rRNA where it nucleates assembly of the head domain of the 30S subunit. This is Small ribosomal subunit protein uS7c (rps7) from Sciadopitys verticillata (Japanese umbrella-pine).